The primary structure comprises 162 residues: Hydrogenase-2 operon protein HybE (162 aa).

This sequence belongs to the HupJ family.

The sequence is that of Hydrogenase-2 operon protein HybE (hybE) from Escherichia coli O6:H1 (strain CFT073 / ATCC 700928 / UPEC).